Consider the following 379-residue polypeptide: Protein trichome birefringence-like 36 (379 aa).

The chain crosses the membrane as a helical; Signal-anchor for type II membrane protein span at residues 8-24 (VLFLSLCLILGKVVLSQ). Residues 123-125 (GDS) carry the GDS motif motif. The DCXHWCLPGXXDXWN motif motif lies at 353–367 (DCSHWCLPGVPDIWN).

Belongs to the PC-esterase family. TBL subfamily.

The protein localises to the membrane. May act as a bridging protein that binds pectin and other cell wall polysaccharides. Probably involved in maintaining esterification of pectins. May be involved in the specific O-acetylation of cell wall polymers. In Arabidopsis thaliana (Mouse-ear cress), this protein is Protein trichome birefringence-like 36 (TBL36).